The following is a 1197-amino-acid chain: DNA-directed RNA polymerase subunit beta (1197 aa).

Belongs to the RNA polymerase beta chain family. In terms of assembly, the RNAP catalytic core consists of 2 alpha, 1 beta, 1 beta' and 1 omega subunit. When a sigma factor is associated with the core the holoenzyme is formed, which can initiate transcription.

It catalyses the reaction RNA(n) + a ribonucleoside 5'-triphosphate = RNA(n+1) + diphosphate. Functionally, DNA-dependent RNA polymerase catalyzes the transcription of DNA into RNA using the four ribonucleoside triphosphates as substrates. This chain is DNA-directed RNA polymerase subunit beta, found in Streptococcus pyogenes serotype M12 (strain MGAS9429).